The primary structure comprises 151 residues: Large ribosomal subunit protein uL15 (151 aa).

Positions 1-45 (MNLSSLKPVKGSTKTCKRVGRGQGSGCGGTSTRGHKGQKSRSGYS) are disordered. The segment covering 21 to 31 (RGQGSGCGGTS) has biased composition (gly residues).

This sequence belongs to the universal ribosomal protein uL15 family. Part of the 50S ribosomal subunit.

Functionally, binds to the 23S rRNA. This is Large ribosomal subunit protein uL15 from Azobacteroides pseudotrichonymphae genomovar. CFP2.